A 548-amino-acid chain; its full sequence is 5-epi-aristolochene synthase 2 (548 aa).

Residues Asp301, Asp305, Asp444, Thr448, and Glu452 each contribute to the Mg(2+) site. The short motif at 301 to 305 (DDTFD) is the DDXXD motif element.

This sequence belongs to the terpene synthase family. In terms of assembly, monomer. The cofactor is Mg(2+). As to expression, expressed in roots, but not in shoots.

It is found in the cytoplasm. The enzyme catalyses (2E,6E)-farnesyl diphosphate = (+)-5-epi-aristolochene + diphosphate. It participates in secondary metabolite biosynthesis; terpenoid biosynthesis. Its function is as follows. Catalyzes the cyclization of trans,trans-farnesyl diphosphate (FPP) to the bicyclic intermediate 5-epi-aristolochene, initial step in the conversion of FPP to the sesquiterpenoid antifungal phytoalexin capsidiol. Produces germacrene A as an enzyme-bound intermediate that is not released by the enzyme, but is further cyclized to produce the bicyclic 5-epi-aristolochene. In Nicotiana attenuata (Coyote tobacco), this protein is 5-epi-aristolochene synthase 2.